The chain runs to 221 residues: Carbonic anhydrase (221 aa).

Residues C38, D40, H99, and C102 each coordinate Zn(2+).

The protein belongs to the beta-class carbonic anhydrase family. The cofactor is Zn(2+).

It catalyses the reaction hydrogencarbonate + H(+) = CO2 + H2O. This is Carbonic anhydrase (cynT) from Helicobacter pylori (strain J99 / ATCC 700824) (Campylobacter pylori J99).